The following is a 434-amino-acid chain: MAQFDLTRINCQYLDRHLTFPLLEFLCGKEIYNQQELLEYILETVNKTNMIDYTMDTRKRLNLSQEMPEELVQRKAEVLATLKQLQNEVAPIMKATDILKNGESMKDSKTFVNALQKDYNFKMEHLYSAYKLAKYLYECGNYQESTSYLYFCLIVMAPNDKNYLNVLWGKLAAEILTLNWNTALEDLTRLRDYIDSANFSTIQALQQRTWLIHWSVLVFFNHPKGRDLIIEMFLYKPLYLNAIQTMCPHIMRYLATAVVINRTRRNALKDLIKVIQQESYTYRDPITEFLECLYVNFDFEGARLKLHECQTVILNDFFIVACLNEFVEDARLMIFETFCRIHQCITISMLADKLNMKPNEAECWIVNLIRNARLNAKIDSKLGHVVMGTQPLSPYQQLVEKIDSLSMRSEHLAGLIERKSKQKNQESIDSWKYY.

Residues Phe-219–Leu-392 enclose the PCI domain.

Belongs to the eIF-3 subunit E family. As to quaternary structure, component of the eukaryotic translation initiation factor 3 (eIF-3) complex. The eIF-3 complex interacts with pix. Interacts with mxt.

Its subcellular location is the cytoplasm. Its function is as follows. Component of the eukaryotic translation initiation factor 3 (eIF-3) complex, which is involved in protein synthesis of a specialized repertoire of mRNAs and, together with other initiation factors, stimulates binding of mRNA and methionyl-tRNAi to the 40S ribosome. The eIF-3 complex specifically targets and initiates translation of a subset of mRNAs involved in cell proliferation. This chain is Eukaryotic translation initiation factor 3 subunit E-2 (eIF3-S6-2), found in Drosophila willistoni (Fruit fly).